Consider the following 79-residue polypeptide: Translational regulator CsrA (79 aa).

It belongs to the CsrA/RsmA family. In terms of assembly, homodimer; the beta-strands of each monomer intercalate to form a hydrophobic core, while the alpha-helices form wings that extend away from the core.

The protein resides in the cytoplasm. Functionally, a translational regulator that binds mRNA to regulate translation initiation and/or mRNA stability. Usually binds in the 5'-UTR at or near the Shine-Dalgarno sequence preventing ribosome-binding, thus repressing translation. Its main target seems to be the major flagellin gene, while its function is anatagonized by FliW. This Geotalea uraniireducens (strain Rf4) (Geobacter uraniireducens) protein is Translational regulator CsrA.